Here is a 381-residue protein sequence, read N- to C-terminus: Homoserine O-succinyltransferase (381 aa).

The AB hydrolase-1 domain maps to 45 to 360 (NAVLVCHALN…PHGHDAFLLD (316 aa)). Ser-151 (nucleophile) is an active-site residue. Residue Arg-221 participates in substrate binding. Active-site residues include Asp-321 and His-354. Asp-355 is a substrate binding site.

The protein belongs to the AB hydrolase superfamily. MetX family. As to quaternary structure, homodimer.

The protein resides in the cytoplasm. It catalyses the reaction L-homoserine + succinyl-CoA = O-succinyl-L-homoserine + CoA. It functions in the pathway amino-acid biosynthesis; L-methionine biosynthesis via de novo pathway; O-succinyl-L-homoserine from L-homoserine: step 1/1. Transfers a succinyl group from succinyl-CoA to L-homoserine, forming succinyl-L-homoserine. The chain is Homoserine O-succinyltransferase from Burkholderia cenocepacia (strain HI2424).